The chain runs to 1197 residues: DNA-directed RNA polymerase subunit beta (1197 aa).

A compositionally biased stretch (polar residues) spans 581-597; it reads QANSPLNDDGSFTNPTV. Disordered stretches follow at residues 581 to 603 and 1172 to 1197; these read QANS…RHGD and EKPD…EENV.

This sequence belongs to the RNA polymerase beta chain family. The RNAP catalytic core consists of 2 alpha, 1 beta, 1 beta' and 1 omega subunit. When a sigma factor is associated with the core the holoenzyme is formed, which can initiate transcription.

The enzyme catalyses RNA(n) + a ribonucleoside 5'-triphosphate = RNA(n+1) + diphosphate. DNA-dependent RNA polymerase catalyzes the transcription of DNA into RNA using the four ribonucleoside triphosphates as substrates. The chain is DNA-directed RNA polymerase subunit beta from Oenococcus oeni (strain ATCC BAA-331 / PSU-1).